Consider the following 294-residue polypeptide: Acetaldehyde dehydrogenase (294 aa).

NAD(+) is bound at residue 11–14; that stretch reads SGNI. Cys126 acts as the Acyl-thioester intermediate in catalysis. NAD(+) contacts are provided by residues 157–165 and Asn269; that span reads SAGPGTRAN.

The protein belongs to the acetaldehyde dehydrogenase family.

The catalysed reaction is acetaldehyde + NAD(+) + CoA = acetyl-CoA + NADH + H(+). The polypeptide is Acetaldehyde dehydrogenase (pheF) (Geobacillus stearothermophilus (Bacillus stearothermophilus)).